Here is a 651-residue protein sequence, read N- to C-terminus: Acetyl-coenzyme A synthetase (651 aa).

Residues 190–193, Thr-312, and Asn-336 each bind CoA; that span reads RGGK. Residues 388–390, 412–417, Asp-501, and Arg-516 each bind ATP; these read GEP and DTWWQT. Ser-524 serves as a coordination point for CoA. Arg-527 contributes to the ATP binding site. Residues Val-538, His-540, and Val-543 each contribute to the Mg(2+) site. Residue Arg-585 coordinates CoA. An N6-acetyllysine modification is found at Lys-610.

This sequence belongs to the ATP-dependent AMP-binding enzyme family. The cofactor is Mg(2+). In terms of processing, acetylated. Deacetylation by the SIR2-homolog deacetylase activates the enzyme.

The catalysed reaction is acetate + ATP + CoA = acetyl-CoA + AMP + diphosphate. Catalyzes the conversion of acetate into acetyl-CoA (AcCoA), an essential intermediate at the junction of anabolic and catabolic pathways. AcsA undergoes a two-step reaction. In the first half reaction, AcsA combines acetate with ATP to form acetyl-adenylate (AcAMP) intermediate. In the second half reaction, it can then transfer the acetyl group from AcAMP to the sulfhydryl group of CoA, forming the product AcCoA. The chain is Acetyl-coenzyme A synthetase from Mesorhizobium japonicum (strain LMG 29417 / CECT 9101 / MAFF 303099) (Mesorhizobium loti (strain MAFF 303099)).